The following is a 231-amino-acid chain: MFRKLAAECFGTFWLVFGGCGSAVLAAGFPELGIGFAGVALAFGLTVLTMAFAVGHISGGHFNPAVTIGLWAGGRFPAKEVVGYVIAQVVGGIVAAALLYLIASGKTGFDAAASGFASNGYGEHSPGGYSMLSALVVELVLSAGFLLVIHGATDKFAPAGFAPIAIGLALTLIHLISIPVTNTSVNPARSTAVAIFQGGWALEQLWFFWVVPIVGGIIGGLIYRTLLEKRN.

2 helical membrane passes run 9-29 (CFGT…AAGF) and 34-54 (IGFA…AFAV). The short motif at 63–65 (NPA) is the NPA 1 element. 3 consecutive transmembrane segments (helical) span residues 82–102 (VGYV…LYLI), 129–149 (YSML…LLVI), and 156–176 (FAPA…IHLI). Residues 186-188 (NPA) carry the NPA 2 motif. A helical transmembrane segment spans residues 202–222 (LEQLWFFWVVPIVGGIIGGLI).

Belongs to the MIP/aquaporin (TC 1.A.8) family. In terms of assembly, homotetramer.

The protein localises to the cell inner membrane. The catalysed reaction is H2O(in) = H2O(out). In terms of biological role, channel that permits osmotically driven movement of water in both directions. It is involved in the osmoregulation and in the maintenance of cell turgor during volume expansion in rapidly growing cells. It mediates rapid entry or exit of water in response to abrupt changes in osmolarity. This Escherichia coli O157:H7 protein is Aquaporin Z.